A 327-amino-acid chain; its full sequence is Voltage-dependent calcium channel gamma-4 subunit (327 aa).

Topologically, residues 1–9 (MVRCDRGLQ) are cytoplasmic. Residues 10-30 (MLLTTAGAFAAFSLMAIAIGT) form a helical membrane-spanning segment. Topologically, residues 31 to 107 (DYWLYSSAHI…EYLLRIVRAS (77 aa)) are extracellular. Asn42 and Asn45 each carry an N-linked (GlcNAc...) asparagine glycan. The chain crosses the membrane as a helical span at residues 108–128 (SVFPILSTILLLLGGLCIGAG). Over 129–136 (RIYSRKNN) the chain is Cytoplasmic. A helical transmembrane segment spans residues 137–157 (IVLSAGILFVAAGLSNIIGII). The Extracellular portion of the chain corresponds to 158–186 (VYISSNTGDPSDKRDEDKKNHYNYGWSFY). A helical transmembrane segment spans residues 187-207 (FGALSFIVAETVGVLAVNIYI). At 208–327 (EKNKELRFKT…SMLNRRTTPV (120 aa)) the chain is on the cytoplasmic side. The tract at residues 235–261 (SYRYRRRRSRSSSRSTEASPSRDVSPM) is disordered. A compositionally biased stretch (low complexity) spans 246–256 (SSRSTEASPSR). Phosphoserine is present on Ser259.

Belongs to the PMP-22/EMP/MP20 family. CACNG subfamily. As to quaternary structure, interacts with CACNA1C. Identified in a complex with the L-type calcium channel subunits CACNA1C, CACNA2D1 and either CACNB1 or CACNB2. Acts as an auxiliary subunit for AMPA-selective glutamate receptors (AMPARs). Interacts with GRIA1. Detected in heart left ventricle.

It is found in the cell membrane. Functionally, regulates the activity of L-type calcium channels that contain CACNA1C as pore-forming subunit. Regulates the trafficking and gating properties of AMPA-selective glutamate receptors (AMPARs), including GRIA1 and GRIA4. Promotes their targeting to the cell membrane and synapses and modulates their gating properties by slowing their rates of activation, deactivation and desensitization and by mediating their resensitization. The chain is Voltage-dependent calcium channel gamma-4 subunit (CACNG4) from Homo sapiens (Human).